We begin with the raw amino-acid sequence, 519 residues long: Trichothecene 15-O-acetyltransferase TRI3 (519 aa).

His-414 contributes to the 15-deacetylcalonectrin binding site.

It belongs to the trichothecene O-acetyltransferase family.

The protein operates within sesquiterpene biosynthesis; trichothecene biosynthesis. In terms of biological role, 15-O-acetyltransferase; part of the core gene cluster that mediates the biosynthesis of trichothecenes, a very large family of chemically related bicyclic sesquiterpene compounds acting as mycotoxins, including T2-toxin. The biosynthesis of trichothecenes begins with the cyclization of farnesyl diphosphate to trichodiene and is catalyzed by the trichodiene synthase TRI5. Trichodiene undergoes a series of oxygenations catalyzed by the cytochrome P450 monooxygenase TRI4. TRI4 controls the addition of four oxygens at C-2, C-3, C-11, and the C-12, C-13-epoxide to form the intermediate isotrichotriol. Isotrichotriol then undergoes a non-enzymatic isomerization and cyclization to form isotrichodermol. During this process, the oxygen at the C-2 position becomes the pyran ring oxygen and the hydroxyl group at C-11 is lost. More complex type A trichothecenes are built by modifying isotrichodermol through a series of paired hydroxylation and acetylation or acylation steps. Isotrichodermol is converted to isotrichodermin by the acetyltransferase TRI101. TRI101 encodes a C-3 transacetylase that acts as a self-protection or resistance factor during biosynthesis and that the presence of a free C-3 hydroxyl group is a key component of Fusarium trichothecene phytotoxicity. A second hydroxyl group is added to C-15 by the trichothecene C-15 hydroxylase TRI11, producing 15-decalonectrin, which is then acetylated by TRI3, producing calonectrin. A third hydroxyl group is added at C-4 by the cytochrome P450 monooxygenase TRI13, converting calonectrin to 3,15-diacetoxyspirpenol, which is subsequently acetylated by the acetyltransferase TRI7. A fourth hydroxyl group is added to C-8 by the cytochrome P450 monooxygenase TRI1, followed by the addition of an isovaleryl moiety by TRI16. Finally, the acetyl group is removed from the C-3 position by the trichothecene C-3 esterase TRI8 to produce T-2 toxin. This is Trichothecene 15-O-acetyltransferase TRI3 from Fusarium sporotrichioides.